The sequence spans 68 residues: EDRPKFCYLPDDPGVCKAHIPRFYYNPASNKCKEFIYGGCGGNANNFETRAECRHTCVASRKGGPRRP.

Pyrrolidone carboxylic acid (Glu) is present on E1. The 51-residue stretch at 7–57 (CYLPDDPGVCKAHIPRFYYNPASNKCKEFIYGGCGGNANNFETRAECRHTC) folds into the BPTI/Kunitz inhibitor domain. Intrachain disulfides connect C7–C57, C16–C40, and C32–C53.

As to expression, expressed by the venom gland.

The protein resides in the secreted. In terms of biological role, serine protease inhibitor that weakly inhibits trypsin (Ki=0.2 uM). May have potassium channel blocking activities. In Pseudocerastes persicus (Persian horned viper), this protein is Kunitz-type serine protease inhibitor PPTI.